The primary structure comprises 523 residues: Probable malate:quinone oxidoreductase (523 aa).

It belongs to the MQO family. FAD serves as cofactor.

The enzyme catalyses (S)-malate + a quinone = a quinol + oxaloacetate. It functions in the pathway carbohydrate metabolism; tricarboxylic acid cycle; oxaloacetate from (S)-malate (quinone route): step 1/1. The polypeptide is Probable malate:quinone oxidoreductase (Agrobacterium fabrum (strain C58 / ATCC 33970) (Agrobacterium tumefaciens (strain C58))).